The chain runs to 466 residues: Glycosyl hydrolase family 109 protein (466 aa).

The tat-type signal signal peptide spans Met1–Ala30. NAD(+) is bound by residues Ser59–Arg60, Asp81, Trp130–His133, Glu151–Val152, and Asn180. Tyr209 is a substrate binding site. Residue Ala241–Trp245 participates in NAD(+) binding. Residues Arg246, Tyr258–His261, and Tyr340 contribute to the substrate site. Tyr258 contacts NAD(+).

It belongs to the Gfo/Idh/MocA family. Glycosyl hydrolase 109 subfamily. NAD(+) serves as cofactor. Post-translationally, predicted to be exported by the Tat system. The position of the signal peptide cleavage has not been experimentally proven.

In terms of biological role, glycosidase. This chain is Glycosyl hydrolase family 109 protein, found in Parabacteroides distasonis (strain ATCC 8503 / DSM 20701 / CIP 104284 / JCM 5825 / NCTC 11152).